The following is a 250-amino-acid chain: NH(3)-dependent NAD(+) synthetase (250 aa).

Residue 30–37 participates in ATP binding; the sequence is GVSGGIDS. Residue D36 coordinates Mg(2+). R117 is a binding site for deamido-NAD(+). T137 is a binding site for ATP. Position 142 (E142) interacts with Mg(2+). Positions 150 and 157 each coordinate deamido-NAD(+). K166 and S188 together coordinate ATP. 234–235 contacts deamido-NAD(+); the sequence is HK.

The protein belongs to the NAD synthetase family. As to quaternary structure, homodimer.

It carries out the reaction deamido-NAD(+) + NH4(+) + ATP = AMP + diphosphate + NAD(+) + H(+). It functions in the pathway cofactor biosynthesis; NAD(+) biosynthesis; NAD(+) from deamido-NAD(+) (ammonia route): step 1/1. Its function is as follows. Catalyzes the ATP-dependent amidation of deamido-NAD to form NAD. Uses ammonia as a nitrogen source. This is NH(3)-dependent NAD(+) synthetase from Mannheimia succiniciproducens (strain KCTC 0769BP / MBEL55E).